The chain runs to 983 residues: Importin beta-like protein kap113 (983 aa).

The Importin N-terminal domain maps to 24–96 (AEGHLNNWKK…RCNALLGSIK (73 aa)).

It belongs to the importin beta family.

The protein localises to the nucleus. Functionally, functions as a component of the nuclear pore complex (NPC). NPC components, collectively referred to as nucleoporins (NUPs), can play the role of both NPC structural components and of docking or interaction partners for transiently associated nuclear transport factors. Active directional transport is assured by both, a Phe-Gly (FG) repeat affinity gradient for these transport factors across the NPC and a transport cofactor concentration gradient across the nuclear envelope. Involved in the export of mRNA from the nucleus to the cytoplasm. May play a role in mitotic spindle formation and/or function. The protein is Importin beta-like protein kap113 (kap113) of Schizosaccharomyces pombe (strain 972 / ATCC 24843) (Fission yeast).